We begin with the raw amino-acid sequence, 950 residues long: 2-oxoglutarate dehydrogenase E1 component (950 aa).

The protein belongs to the alpha-ketoglutarate dehydrogenase family. In terms of assembly, homodimer. Part of the 2-oxoglutarate dehydrogenase (OGDH) complex composed of E1 (2-oxoglutarate dehydrogenase), E2 (dihydrolipoamide succinyltransferase) and E3 (dihydrolipoamide dehydrogenase); the complex contains multiple copies of the three enzymatic components (E1, E2 and E3). It depends on thiamine diphosphate as a cofactor.

It carries out the reaction N(6)-[(R)-lipoyl]-L-lysyl-[protein] + 2-oxoglutarate + H(+) = N(6)-[(R)-S(8)-succinyldihydrolipoyl]-L-lysyl-[protein] + CO2. Functionally, E1 component of the 2-oxoglutarate dehydrogenase (OGDH) complex which catalyzes the decarboxylation of 2-oxoglutarate, the first step in the conversion of 2-oxoglutarate to succinyl-CoA and CO(2). In Geobacillus kaustophilus (strain HTA426), this protein is 2-oxoglutarate dehydrogenase E1 component.